The chain runs to 157 residues: S-ribosylhomocysteine lyase (157 aa).

H54, H58, and C126 together coordinate Fe cation.

This sequence belongs to the LuxS family. In terms of assembly, homodimer. It depends on Fe cation as a cofactor.

It carries out the reaction S-(5-deoxy-D-ribos-5-yl)-L-homocysteine = (S)-4,5-dihydroxypentane-2,3-dione + L-homocysteine. Involved in the synthesis of autoinducer 2 (AI-2) which is secreted by bacteria and is used to communicate both the cell density and the metabolic potential of the environment. The regulation of gene expression in response to changes in cell density is called quorum sensing. Catalyzes the transformation of S-ribosylhomocysteine (RHC) to homocysteine (HC) and 4,5-dihydroxy-2,3-pentadione (DPD). The chain is S-ribosylhomocysteine lyase from Bacillus anthracis (strain A0248).